Consider the following 747-residue polypeptide: ATP-dependent DNA helicase Hel308 (747 aa).

ATP contacts are provided by residues Q29 and 47–54 (VPTASGKT). The Helicase ATP-binding domain occupies 34–200 (DAGVADGESL…WLDAELVDSS (167 aa)). A DEAH box motif is present at residues 145-148 (DEVH). The Helicase C-terminal domain occupies 234-434 (PTEAVVRETL…REPSMRTHLL (201 aa)). Positions 711–747 (AAGHQQPEMDGVTPDADVKESAAAAGTDDGQANLGDF) are disordered.

The protein belongs to the helicase family. Hel308 subfamily. As to quaternary structure, monomer.

The enzyme catalyses Couples ATP hydrolysis with the unwinding of duplex DNA by translocating in the 3'-5' direction.. It carries out the reaction ATP + H2O = ADP + phosphate + H(+). Its function is as follows. DNA-dependent ATPase and 3'-5' DNA helicase that may be involved in repair of stalled replication forks. The chain is ATP-dependent DNA helicase Hel308 from Natronomonas pharaonis (strain ATCC 35678 / DSM 2160 / CIP 103997 / JCM 8858 / NBRC 14720 / NCIMB 2260 / Gabara) (Halobacterium pharaonis).